A 381-amino-acid chain; its full sequence is MCTSLSELKCPVFSTKRKLLLEFALRTSVDMAAQEGVNYLSGLGLSRLICLPMALRAAIELNVFEIISQAGPDAQLSPSDIVAKIPTKNPSAAISLDRILRMLGASSILSVSTTKSGRVYGLNEESRCLVASEDKVSVVPMLLFTSDKAVVESFYNIKDVVLEEGVIPFDRTHGMDFFQYAGKEERVNKSFNQAMGAGSTIAFDEVFKVYKGFDNLKELVDVGGGIGTSLSNIVAKHPHIRGINFELPHVIGDAPDYPGVEHVPGDMFEGVPNAQNILLKWVLHDWDDDRSIKILKNCWKALPENGTVIVIEFVLPQVLGNNAESFNALTPDLLMMALNPGGKERTTIEFDGLAKAAGFAETKFFPISQGLHVMEFHKINC.

S-adenosyl-L-methionine is bound by residues G223, E246, D266, M267, and K280. The active-site Proton acceptor is the H284.

This sequence belongs to the class I-like SAM-binding methyltransferase superfamily. Cation-independent O-methyltransferase family. COMT subfamily.

The catalysed reaction is (S)-scoulerine + S-adenosyl-L-methionine = (S)-tetrahydrocolumbamine + S-adenosyl-L-homocysteine + H(+). Its function is as follows. Produces a precursor of protoberberine alkaloids. This Coptis japonica (Japanese goldthread) protein is (S)-scoulerine 9-O-methyltransferase (SMT).